A 150-amino-acid chain; its full sequence is Probable histone H2A.5 (150 aa).

Residues 1–12 (MESSQATTKPTR) show a composition bias toward low complexity. Disordered stretches follow at residues 1-28 (MESS…SVSK) and 130-150 (KSTA…PKKA). A compositionally biased stretch (polar residues) spans 131-150 (STASSSQAEKASATKSPKKA). Position 146 is a phosphoserine (serine 146). An SPKK motif motif is present at residues 146-149 (SPKK).

It belongs to the histone H2A family. As to quaternary structure, the nucleosome is a histone octamer containing two molecules each of H2A, H2B, H3 and H4 assembled in one H3-H4 heterotetramer and two H2A-H2B heterodimers. The octamer wraps approximately 147 bp of DNA. In terms of processing, not ubiquitinated.

The protein localises to the nucleus. The protein resides in the chromosome. Its function is as follows. Core component of nucleosome. Nucleosomes wrap and compact DNA into chromatin, limiting DNA accessibility to the cellular machineries which require DNA as a template. Histones thereby play a central role in transcription regulation, DNA repair, DNA replication and chromosomal stability. DNA accessibility is regulated via a complex set of post-translational modifications of histones, also called histone code, and nucleosome remodeling. The sequence is that of Probable histone H2A.5 from Arabidopsis thaliana (Mouse-ear cress).